A 467-amino-acid polypeptide reads, in one-letter code: Signal transduction histidine-protein kinase BaeS (467 aa).

Over 1 to 11 (MKFWRPGITGK) the chain is Cytoplasmic. The helical transmembrane segment at 12 to 32 (LFLAIFATCIVLLISMHWAVR) threads the bilayer. The Periplasmic portion of the chain corresponds to 33–167 (ISFERGFIDY…NFDKQQRQTS (135 aa)). A helical membrane pass occupies residues 168-186 (WLIVALATLLAALATFLLA). Residues 187 to 239 (RGLLAPVKRLVDGTHKLAAGDFTTRVTPTSEDELGKLAQDFNQLASTLEKNQQ) form the HAMP domain. Topologically, residues 187–467 (RGLLAPVKRL…PLERDLQREV (281 aa)) are cytoplasmic. The Histidine kinase domain maps to 247-461 (DISHELRTPL…SITVELPLER (215 aa)). At histidine 250 the chain carries Phosphohistidine; by autocatalysis.

Autophosphorylated.

The protein localises to the cell inner membrane. The enzyme catalyses ATP + protein L-histidine = ADP + protein N-phospho-L-histidine.. Member of the two-component regulatory system BaeS/BaeR which responds to envelope stress. Activates expression of periplasmic chaperone spy in response to spheroplast formation, indole and P pili protein PapG overexpression. Activates BaeR by phosphorylation which then activates the mdtABCD and probably the CRISPR-Cas casABCDE-ygbT-ygbF operons. The protein is Signal transduction histidine-protein kinase BaeS of Escherichia coli (strain K12).